We begin with the raw amino-acid sequence, 99 residues long: Large ribosomal subunit protein uL23 (99 aa).

The protein belongs to the universal ribosomal protein uL23 family. As to quaternary structure, part of the 50S ribosomal subunit. Contacts protein L29, and trigger factor when it is bound to the ribosome.

Its function is as follows. One of the early assembly proteins it binds 23S rRNA. One of the proteins that surrounds the polypeptide exit tunnel on the outside of the ribosome. Forms the main docking site for trigger factor binding to the ribosome. The protein is Large ribosomal subunit protein uL23 of Francisella tularensis subsp. holarctica (strain OSU18).